Here is a 444-residue protein sequence, read N- to C-terminus: tRNA-2-methylthio-N(6)-dimethylallyladenosine synthase (444 aa).

The MTTase N-terminal domain maps to 2-119 (KKVYIKTFGC…LPDLIESRKQ (118 aa)). C11, C48, C82, C156, C160, and C163 together coordinate [4Fe-4S] cluster. The region spanning 142–374 (KVDGGAAFVS…NEVIEAKGYA (233 aa)) is the Radical SAM core domain. In terms of domain architecture, TRAM spans 377-440 (QSMVGTVQRV…PHSLAGEALT (64 aa)).

Belongs to the methylthiotransferase family. MiaB subfamily. Monomer. [4Fe-4S] cluster serves as cofactor.

Its subcellular location is the cytoplasm. It carries out the reaction N(6)-dimethylallyladenosine(37) in tRNA + (sulfur carrier)-SH + AH2 + 2 S-adenosyl-L-methionine = 2-methylsulfanyl-N(6)-dimethylallyladenosine(37) in tRNA + (sulfur carrier)-H + 5'-deoxyadenosine + L-methionine + A + S-adenosyl-L-homocysteine + 2 H(+). In terms of biological role, catalyzes the methylthiolation of N6-(dimethylallyl)adenosine (i(6)A), leading to the formation of 2-methylthio-N6-(dimethylallyl)adenosine (ms(2)i(6)A) at position 37 in tRNAs that read codons beginning with uridine. This chain is tRNA-2-methylthio-N(6)-dimethylallyladenosine synthase, found in Chromobacterium violaceum (strain ATCC 12472 / DSM 30191 / JCM 1249 / CCUG 213 / NBRC 12614 / NCIMB 9131 / NCTC 9757 / MK).